The sequence spans 360 residues: Peptide chain release factor 1 (360 aa).

N5-methylglutamine is present on Gln-235.

This sequence belongs to the prokaryotic/mitochondrial release factor family. Methylated by PrmC. Methylation increases the termination efficiency of RF1.

It localises to the cytoplasm. In terms of biological role, peptide chain release factor 1 directs the termination of translation in response to the peptide chain termination codons UAG and UAA. In Paraburkholderia phymatum (strain DSM 17167 / CIP 108236 / LMG 21445 / STM815) (Burkholderia phymatum), this protein is Peptide chain release factor 1.